The chain runs to 483 residues: FAD-linked oxidoreductase easE (483 aa).

An FAD-binding PCMH-type domain is found at 10–193; sequence QGRLPFYSAV…TEATVRVFSD (184 aa).

The protein belongs to the oxygen-dependent FAD-linked oxidoreductase family. FAD serves as cofactor.

It functions in the pathway alkaloid biosynthesis; ergot alkaloid biosynthesis. In terms of biological role, FAD-linked oxidoreductase; part of the gene cluster that mediates the biosynthesis of fungal ergot alkaloid. DmaW catalyzes the first step of ergot alkaloid biosynthesis by condensing dimethylallyl diphosphate (DMAP) and tryptophan to form 4-dimethylallyl-L-tryptophan. The second step is catalyzed by the methyltransferase easF that methylates 4-dimethylallyl-L-tryptophan in the presence of S-adenosyl-L-methionine, resulting in the formation of 4-dimethylallyl-L-abrine. The catalase easC and the FAD-dependent oxidoreductase easE then transform 4-dimethylallyl-L-abrine to chanoclavine-I which is further oxidized by easD in the presence of NAD(+), resulting in the formation of chanoclavine-I aldehyde. Agroclavine dehydrogenase easG then mediates the conversion of chanoclavine-I aldehyde to agroclavine via a non-enzymatic adduct reaction: the substrate is an iminium intermediate that is formed spontaneously from chanoclavine-I aldehyde in the presence of glutathione. The presence of easA is not required to complete this reaction. Further conversion of agroclavine to paspalic acid is a two-step process involving oxidation of agroclavine to elymoclavine and of elymoclavine to paspalic acid, the second step being performed by the elymoclavine oxidase cloA. Paspalic acid is then further converted to D-lysergic acid. Ergopeptines are assembled from D-lysergic acid and three different amino acids by the D-lysergyl-peptide-synthetases composed each of a monomudular and a trimodular nonribosomal peptide synthetase subunit. LpsB and lpsC encode the monomodular subunits responsible for D-lysergic acid activation and incorporation into the ergopeptine backbone. LpsA1 and A2 subunits encode the trimodular nonribosomal peptide synthetase assembling the tripeptide portion of ergopeptines. LpsA1 is responsible for formation of the major ergopeptine, ergotamine, and lpsA2 for alpha-ergocryptine, the minor ergopeptine of the total alkaloid mixture elaborated by C.purpurea. D-lysergyl-tripeptides are assembled by the nonribosomal peptide synthetases and released as N-(D-lysergyl-aminoacyl)-lactams. Cyclolization of the D-lysergyl-tripeptides is performed by the Fe(2+)/2-ketoglutarate-dependent dioxygenase easH which introduces a hydroxyl group into N-(D-lysergyl-aminoacyl)-lactam at alpha-C of the aminoacyl residue followed by spontaneous condensation with the terminal lactam carbonyl group. The polypeptide is FAD-linked oxidoreductase easE (Claviceps purpurea (strain 20.1) (Ergot fungus)).